The sequence spans 151 residues: Deoxyuridine 5'-triphosphate nucleotidohydrolase (151 aa).

Residues 70-72, Asn-83, 87-89, and Met-97 contribute to the substrate site; these read RSG and LID.

This sequence belongs to the dUTPase family. It depends on Mg(2+) as a cofactor.

It catalyses the reaction dUTP + H2O = dUMP + diphosphate + H(+). It participates in pyrimidine metabolism; dUMP biosynthesis; dUMP from dCTP (dUTP route): step 2/2. In terms of biological role, this enzyme is involved in nucleotide metabolism: it produces dUMP, the immediate precursor of thymidine nucleotides and it decreases the intracellular concentration of dUTP so that uracil cannot be incorporated into DNA. This chain is Deoxyuridine 5'-triphosphate nucleotidohydrolase, found in Histophilus somni (strain 129Pt) (Haemophilus somnus).